We begin with the raw amino-acid sequence, 702 residues long: Methionine--tRNA ligase (702 aa).

The short motif at 23-33 (PYANGPLHLGH) is the 'HIGH' region element. Residues cysteine 154, cysteine 157, cysteine 167, and cysteine 170 each contribute to the Zn(2+) site. Residues 341 to 345 (KMSKS) carry the 'KMSKS' region motif. ATP is bound at residue lysine 344. The disordered stretch occupies residues 562–593 (LAPPPASAKQQNASMSNTAPPPTAEKPETTAP). The segment covering 569 to 578 (AKQQNASMSN) has biased composition (polar residues). The region spanning 599 to 702 (DFAKLDLRIG…SSAQPGMPVR (104 aa)) is the tRNA-binding domain.

The protein belongs to the class-I aminoacyl-tRNA synthetase family. MetG type 1 subfamily. As to quaternary structure, homodimer. Requires Zn(2+) as cofactor.

Its subcellular location is the cytoplasm. It catalyses the reaction tRNA(Met) + L-methionine + ATP = L-methionyl-tRNA(Met) + AMP + diphosphate. Its function is as follows. Is required not only for elongation of protein synthesis but also for the initiation of all mRNA translation through initiator tRNA(fMet) aminoacylation. The protein is Methionine--tRNA ligase of Xylella fastidiosa (strain 9a5c).